The primary structure comprises 1157 residues: ATP-dependent helicase/deoxyribonuclease subunit B (1157 aa).

Residues Met-1–Thr-278 enclose the UvrD-like helicase ATP-binding domain. Residue Gly-8–Thr-15 participates in ATP binding. Positions Glu-272–Leu-590 constitute a UvrD-like helicase C-terminal domain. [4Fe-4S] cluster-binding residues include Cys-794, Cys-1115, Cys-1118, and Cys-1124.

It belongs to the helicase family. AddB/RexB type 1 subfamily. As to quaternary structure, heterodimer of AddA and AddB. The cofactor is Mg(2+). Requires [4Fe-4S] cluster as cofactor.

Its function is as follows. The heterodimer acts as both an ATP-dependent DNA helicase and an ATP-dependent, dual-direction single-stranded exonuclease. Recognizes the chi site generating a DNA molecule suitable for the initiation of homologous recombination. The AddB subunit has 5' -&gt; 3' nuclease activity but not helicase activity. The sequence is that of ATP-dependent helicase/deoxyribonuclease subunit B from Listeria monocytogenes serotype 4a (strain HCC23).